Consider the following 64-residue polypeptide: Large ribosomal subunit protein bL32 (64 aa).

Residues 1–23 (MAVQKSRVTPSRRGQRRSHDALA) form a disordered region.

Belongs to the bacterial ribosomal protein bL32 family.

This chain is Large ribosomal subunit protein bL32, found in Xylella fastidiosa (strain M23).